Consider the following 379-residue polypeptide: Alcohol dehydrogenase 1 (379 aa).

Residues Cys-47, Thr-49, His-69, Cys-99, Cys-102, Cys-105, Cys-113, and Cys-177 each coordinate Zn(2+). 2 residues coordinate an alcohol: Thr-49 and His-69. Thr-49 is an NAD(+) binding site. Residues 202 to 207, Asp-226, Arg-231, Thr-272, Val-295, 295 to 297, Phe-322, and Arg-372 each bind NAD(+); these read GLGAVG and VGV.

Belongs to the zinc-containing alcohol dehydrogenase family. Homodimer. It depends on Zn(2+) as a cofactor.

It is found in the cytoplasm. The enzyme catalyses a primary alcohol + NAD(+) = an aldehyde + NADH + H(+). It catalyses the reaction a secondary alcohol + NAD(+) = a ketone + NADH + H(+). The sequence is that of Alcohol dehydrogenase 1 (ADH1) from Zea mays (Maize).